Consider the following 355-residue polypeptide: MDFIFHEKQEGFLCAQHCLNNLLQGEYFSPVELASIAHQLDEEERMRMAEGGVTSEEYLAFLQQPSENMDDTGFFSIQVISNALKFWGLEIIHFNNPEYQKLGIDPINERSFICNYKQHWFTIRKFGKHWFNLNSLLAGPELISDTCLANFLARLQQQAYSVFVVKGDLPDCEADQLLQIISVEEMDTPKLNGKKLVKQKEHRVYKTVLEKVSEESDESGTSDQDEEDFQRALELSRQETNREDEHLRSTIELSMQGSSGNTSQDLPKTSCVTPASEQPKKIKEDYFEKHQQEQKQQQQQSDLPGHSSYLHERPTTSSRAIESDLSDDISEGTVQAAVDTILEIMRKNLKIKGEK.

A Josephin domain is found at M1 to I180. C14 acts as the Nucleophile in catalysis. H119 functions as the Proton acceptor in the catalytic mechanism. Residue N134 is part of the active site. 2 disordered regions span residues L209 to Q230 and L253 to E331. Acidic residues predominate over residues E215–D228. 2 consecutive UIM domains span residues Q224–E243 and D244–S258. The span at L253–S276 shows a compositional bias: polar residues. The span at Q278–E293 shows a compositional bias: basic and acidic residues.

Widely expressed.

The protein localises to the nucleus. It carries out the reaction Thiol-dependent hydrolysis of ester, thioester, amide, peptide and isopeptide bonds formed by the C-terminal Gly of ubiquitin (a 76-residue protein attached to proteins as an intracellular targeting signal).. In terms of biological role, deubiquitinating enzyme that cleaves both 'Lys-48'-linked and 'Lys-63'-linked poly-ubiquitin chains (in vitro). Acts as a deubiquitinating enzyme for the transcription factor KLF5, playing a role in the regulation of KLF5 stability. This is Ataxin-3-like protein from Homo sapiens (Human).